A 1218-amino-acid polypeptide reads, in one-letter code: Probable RNA-dependent RNA polymerase SHL2 (1218 aa).

This sequence belongs to the RdRP family.

The catalysed reaction is RNA(n) + a ribonucleoside 5'-triphosphate = RNA(n+1) + diphosphate. Functionally, involved in the RNA silencing pathway. Probably required for the generation of small interfering RNAs (siRNAs). Regulates shoot apical meristem (SAM) initiation and maintenance and leaf polarization through the trans-acting siRNAS (ta-siRNAs) pathway which probably modulates the expression of the ARF2, ARF3, ARF4, ARF14 and ARF15 genes. This Oryza sativa subsp. japonica (Rice) protein is Probable RNA-dependent RNA polymerase SHL2 (SHL2).